The sequence spans 331 residues: Nucleotide sugar transporter SLC35B4 (331 aa).

11 consecutive transmembrane segments (helical) span residues 4-24 (ALAVGLVFAGCCSNVIFLELL), 30-50 (GCGNIVTFAQFLFIAVEGFLF), 59-79 (PAIPIRYYAIMVTMFFTVSVV), 92-112 (LHMIFRSGSLIANMILGIIIL), 117-137 (SIFKYTSIALVSVGIFICTFM), 153-173 (GFQAFVWWLLGIGALTFALLM), 201-221 (ALPLPGFVFLASDIYDHAVLF), 229-249 (IPVIGVTLPIMWFYLLMNIIT), 251-267 (YVCIRGVFILTTECASL), 268-288 (TVTLVVTLRKFVSLIFSILYF), and 291-311 (PFTLWHWLGTLFVFIGTLMYT). Positions 326 to 331 (KDSKKN) match the Mediates endoplasmic reticulum retention motif.

Belongs to the nucleotide-sugar transporter family. SLC35B subfamily.

It is found in the endoplasmic reticulum membrane. The catalysed reaction is UDP-N-acetyl-alpha-D-glucosamine(in) + UDP-alpha-D-glucuronate(out) = UDP-N-acetyl-alpha-D-glucosamine(out) + UDP-alpha-D-glucuronate(in). It carries out the reaction UDP-alpha-D-xylose(in) + UDP-alpha-D-glucuronate(out) = UDP-alpha-D-xylose(out) + UDP-alpha-D-glucuronate(in). Functionally, antiporter that transports nucleotide sugars across the endoplasmic reticulum (ER) membrane in exchange for another nucleotide sugar. May couple UDP-alpha-D-glucuronate (UDP-GlcA) or UDP-alpha-D-xylose (UDP-Xyl) efflux to UDP-alpha-D-glucuronate (UDP-GlcA) influx into the ER lumen, which in turn stimulates glucuronidation and excretion of endobiotics and xenobiotics. The sequence is that of Nucleotide sugar transporter SLC35B4 (SLC35B4) from Pongo abelii (Sumatran orangutan).